Reading from the N-terminus, the 488-residue chain is Multidrug resistance outer membrane protein MdtP (488 aa).

The first 23 residues, 1 to 23 (MINRQLSRLLLCSILGSTTLISG), serve as a signal peptide directing secretion. Cys24 is lipidated: N-palmitoyl cysteine. Cys24 is lipidated: S-diacylglycerol cysteine.

The protein belongs to the outer membrane factor (OMF) (TC 1.B.17) family. Could be part of a tripartite efflux system composed of MdtN, MdtO and MdtP.

Its subcellular location is the cell outer membrane. In terms of biological role, could be involved in resistance to puromycin, acriflavine and tetraphenylarsonium chloride. The protein is Multidrug resistance outer membrane protein MdtP (mdtP) of Shigella flexneri.